The primary structure comprises 178 residues: uncharacterized protein (178 aa).

Residues 1-23 (MNYSVIWAITILILGLVLTLAWA) form the signal peptide.

This is an uncharacterized protein from Invertebrate iridescent virus 3 (IIV-3).